Consider the following 545-residue polypeptide: MAKEIKFSDSARNKLFNGVQQLFDAVKVTMGPRGRNVLIQKSYGAPVITKDGVSVAKEVDLTNPIENMGAQLVKDVASKTADEAGDGTTTATVLAYGVFKEGLRNVISGANPIEIKRGMDKTVNAIVNELNKSSKKIARKDEIIQVATISANSDKKIGELIANAMEKVGSDGVITVEEAKGINDELTVVEGMQFDRGYISPYFVTDTNKMIAKLENPYILITDKKVSSIKDILPILEEIMKTGRPLLIIADDVDGEALTTLVVNKMRGVFNVVAVKAPEFGDKRKQVLEDIAILTGGSFVTDDLGISFDKVTLQDLGQAESVVIDKDNSTIVKGKGLESQIKERISKIKTAIEMTDSDYDKDSLRNRLAKLNKGVAVIKVGAVSEVELKEKKDRVDDALSATKAAIEEGIVIGGGAALVHVSKRINVNTLNLIGDEKIGYQIVMSAIMSPISQIVSNAGFDKGVVINEILKATNPHLGFNAATGKYVDMFQTGIIDPVKVTRIALQNAVSVSSMLLTTEAVIYDVKDDKEDSVPAMPNMGMGGMM.

ATP-binding positions include 29-32 (TMGP), lysine 50, 86-90 (DGTTT), glycine 414, 480-482 (NAA), and aspartate 496.

The protein belongs to the chaperonin (HSP60) family. In terms of assembly, forms a cylinder of 14 subunits composed of two heptameric rings stacked back-to-back. Interacts with the co-chaperonin GroES.

The protein resides in the cytoplasm. The catalysed reaction is ATP + H2O + a folded polypeptide = ADP + phosphate + an unfolded polypeptide.. Its function is as follows. Together with its co-chaperonin GroES, plays an essential role in assisting protein folding. The GroEL-GroES system forms a nano-cage that allows encapsulation of the non-native substrate proteins and provides a physical environment optimized to promote and accelerate protein folding. The polypeptide is Chaperonin GroEL (Malacoplasma penetrans (strain HF-2) (Mycoplasma penetrans)).